Reading from the N-terminus, the 526-residue chain is ATP synthase subunit alpha (526 aa).

171-178 (GDRQTGKT) contacts ATP.

The protein belongs to the ATPase alpha/beta chains family. In terms of assembly, F-type ATPases have 2 components, CF(1) - the catalytic core - and CF(0) - the membrane proton channel. CF(1) has five subunits: alpha(3), beta(3), gamma(1), delta(1), epsilon(1). CF(0) has three main subunits: a(1), b(2) and c(9-12). The alpha and beta chains form an alternating ring which encloses part of the gamma chain. CF(1) is attached to CF(0) by a central stalk formed by the gamma and epsilon chains, while a peripheral stalk is formed by the delta and b chains.

Its subcellular location is the cell inner membrane. The catalysed reaction is ATP + H2O + 4 H(+)(in) = ADP + phosphate + 5 H(+)(out). In terms of biological role, produces ATP from ADP in the presence of a proton gradient across the membrane. The alpha chain is a regulatory subunit. The polypeptide is ATP synthase subunit alpha (Cytophaga hutchinsonii (strain ATCC 33406 / DSM 1761 / CIP 103989 / NBRC 15051 / NCIMB 9469 / D465)).